The primary structure comprises 1001 residues: DNA topoisomerase 3-alpha (1001 aa).

The Toprim domain maps to 35–179; sequence KVLCVAEKND…NLQVLRARFS (145 aa). One can recognise a Topo IA-type catalytic domain in the interval 197–617; the sequence is DQRVSDAVDV…QQVQKYKQVF (421 aa). Catalysis depends on Tyr362, which acts as the O-(5'-phospho-DNA)-tyrosine intermediate. A disordered region spans residues 400–424; the sequence is GGPTPRNGNKSDQAHPPIHPTKYTN. The C4-type zinc finger occupies 658 to 685; that stretch reads CPQCNKDMVLKTKKNGGFYLSCMGFPEC. The span at 774 to 792 shows a compositional bias: polar residues; sequence RMDNSQHPQPADSRQTGSS. A disordered region spans residues 774–810; sequence RMDNSQHPQPADSRQTGSSKALAQTLPPPTAAGESNS. Cys813, Cys815, Cys838, Cys843, Cys897, Cys899, Cys922, and Cys930 together coordinate Zn(2+). 2 consecutive GRF-type zinc fingers follow at residues 813-852 and 897-939; these read CNCG…ADSP and CLCS…VDEN. Residues 937-1001 form a disordered region; sequence DENTAPGTSG…HTRPFCPQNR (65 aa). A compositionally biased stretch (basic and acidic residues) spans 953-964; sequence DRGRTLESEARS.

It belongs to the type IA topoisomerase family. Binds ssDNA. Interacts (via N-terminal region) with BLM; the interaction is direct. Directly interacts with RMI1. Component of the RMI complex, containing at least TOP3A, RMI1 and RMI2. The RMI complex interacts with BLM. The cofactor is Mg(2+). In terms of tissue distribution, high expression is found in testis, heart, skeletal muscle and pancreas.

Its subcellular location is the mitochondrion matrix. It catalyses the reaction ATP-independent breakage of single-stranded DNA, followed by passage and rejoining.. In terms of biological role, releases the supercoiling and torsional tension of DNA introduced during the DNA replication and transcription by transiently cleaving and rejoining one strand of the DNA duplex. Introduces a single-strand break via transesterification at a target site in duplex DNA. The scissile phosphodiester is attacked by the catalytic tyrosine of the enzyme, resulting in the formation of a DNA-(5'-phosphotyrosyl)-enzyme intermediate and the expulsion of a 3'-OH DNA strand. The free DNA strand then undergoes passage around the unbroken strand thus removing DNA supercoils. Finally, in the religation step, the DNA 3'-OH attacks the covalent intermediate to expel the active-site tyrosine and restore the DNA phosphodiester backbone. As an essential component of the RMI complex it is involved in chromosome separation and the processing of homologous recombination intermediates to limit DNA crossover formation in cells. Has DNA decatenation activity. It is required for mtDNA decatenation and segregation after completion of replication, in a process that does not require BLM, RMI1 and RMI2. This Homo sapiens (Human) protein is DNA topoisomerase 3-alpha (TOP3A).